The sequence spans 737 residues: Disintegrin and metalloproteinase domain-containing protein 2 (737 aa).

The first 18 residues, 1–18 (MWLLLLLLSGLSRLGGLS), serve as a signal peptide directing secretion. A propeptide spanning residues 19–180 (EPQTEGTREK…YKIRSIKPQR (162 aa)) is cleaved from the precursor. Residues 19–688 (EPQTEGTREK…ASAYRSKSAR (670 aa)) lie on the Extracellular side of the membrane. Asn-128 and Asn-226 each carry an N-linked (GlcNAc...) asparagine glycan. Positions 184 to 381 (HYLEIHIVVE…QSSHCLQNQP (198 aa)) constitute a Peptidase M12B domain. 4 cysteine pairs are disulfide-bonded: Cys-293–Cys-376, Cys-335–Cys-360, Cys-337–Cys-342, and Cys-450–Cys-470. N-linked (GlcNAc...) asparagine glycans are attached at residues Asn-359, Asn-464, Asn-491, and Asn-571. The region spanning 389-478 (MAVCGNGELE…VCEEDFFVQD (90 aa)) is the Disintegrin domain. The EGF-like domain maps to 617-650 (LNYDCTPEKCNHHGVCNNKKHCHCEPTYLPPDCK). Disulfide bonds link Cys-621/Cys-632, Cys-626/Cys-638, and Cys-640/Cys-649. A helical transmembrane segment spans residues 689–709 (WPFFLIIPFYVVILVLIGMLV). Over 710 to 737 (KVYSQRKKWRMDDFSSEEQFESESESKD) the chain is Cytoplasmic. Ser-731 is subject to Phosphoserine.

In terms of assembly, heterodimer with ADAM1/fertilin subunit alpha. Post-translationally, the prodomain and the metalloprotease domain are cleaved during the epididymal maturation of the spermatozoa.

The protein resides in the membrane. In terms of biological role, sperm surface membrane protein that may be involved in sperm-egg plasma membrane adhesion and fusion during fertilization. Could have a direct role in sperm-zona binding or migration of sperm from the uterus into the oviduct. Interactions with egg membrane could be mediated via binding between its disintegrin-like domain to one or more integrins receptors on the egg. This is a non catalytic metalloprotease-like protein. In Rattus norvegicus (Rat), this protein is Disintegrin and metalloproteinase domain-containing protein 2 (Adam2).